The chain runs to 90 residues: U7-theraphotoxin-Hhn1f (90 aa).

Positions 1 to 19 (MKTAIFTVVLALAVFAVLS) are cleaved as a signal peptide. Residues 20 to 50 (FGWEANEKALSEEFTELIHEKEAASETEARG) constitute a propeptide that is removed on maturation. 3 cysteine pairs are disulfide-bonded: Cys-51–Cys-65, Cys-58–Cys-70, and Cys-64–Cys-81.

This sequence belongs to the neurotoxin 10 (Hwtx-1) family. 13 (Hntx-13) subfamily. As to expression, expressed by the venom gland.

The protein resides in the secreted. Its function is as follows. Ion channel inhibitor. The protein is U7-theraphotoxin-Hhn1f of Cyriopagopus hainanus (Chinese bird spider).